We begin with the raw amino-acid sequence, 505 residues long: Glucan endo-1,3-beta-glucosidase 4 (505 aa).

Positions 1–23 are cleaved as a signal peptide; it reads MLLPRWFAEALLLLLSILACSNA. Residues asparagine 70 and asparagine 110 are each glycosylated (N-linked (GlcNAc...) asparagine). The active-site Proton donor is glutamate 119. N-linked (GlcNAc...) asparagine glycosylation is found at asparagine 178 and asparagine 256. Glutamate 266 acts as the Nucleophile in catalysis. Residues asparagine 298, asparagine 338, and asparagine 357 are each glycosylated (N-linked (GlcNAc...) asparagine). An intrachain disulfide couples cysteine 363 to cysteine 426. Asparagine 453 is a glycosylation site (N-linked (GlcNAc...) asparagine). Alanine 474 carries GPI-anchor amidated alanine lipidation. A propeptide spans 475–505 (removed in mature form); sequence NARIIFSYHLPILAPLALTLLQLLLQHDRLL.

It belongs to the glycosyl hydrolase 17 family. Contains two additional disulfide bonds.

The protein localises to the cell membrane. It carries out the reaction Hydrolysis of (1-&gt;3)-beta-D-glucosidic linkages in (1-&gt;3)-beta-D-glucans.. The polypeptide is Glucan endo-1,3-beta-glucosidase 4 (Arabidopsis thaliana (Mouse-ear cress)).